Here is a 230-residue protein sequence, read N- to C-terminus: Thymidylate synthase 1 (230 aa).

DUMP is bound at residue 92 to 93 (RR). Residue Cys112 is the Nucleophile of the active site. DUMP is bound by residues 132–135 (RSND), Asn143, and 173–175 (HVY). Asp135 contributes to the (6R)-5,10-methylene-5,6,7,8-tetrahydrofolate binding site.

The protein belongs to the thymidylate synthase family. Bacterial-type ThyA subfamily. As to quaternary structure, homodimer.

It localises to the cytoplasm. The catalysed reaction is dUMP + (6R)-5,10-methylene-5,6,7,8-tetrahydrofolate = 7,8-dihydrofolate + dTMP. It functions in the pathway pyrimidine metabolism; dTTP biosynthesis. Its function is as follows. Catalyzes the reductive methylation of 2'-deoxyuridine-5'-monophosphate (dUMP) to 2'-deoxythymidine-5'-monophosphate (dTMP) while utilizing 5,10-methylenetetrahydrofolate (mTHF) as the methyl donor and reductant in the reaction, yielding dihydrofolate (DHF) as a by-product. This enzymatic reaction provides an intracellular de novo source of dTMP, an essential precursor for DNA biosynthesis. This Bacillus amyloliquefaciens (Bacillus velezensis) protein is Thymidylate synthase 1.